Reading from the N-terminus, the 156-residue chain is Small ribosomal subunit protein uS7 (156 aa).

This sequence belongs to the universal ribosomal protein uS7 family. In terms of assembly, part of the 30S ribosomal subunit. Contacts proteins S9 and S11.

In terms of biological role, one of the primary rRNA binding proteins, it binds directly to 16S rRNA where it nucleates assembly of the head domain of the 30S subunit. Is located at the subunit interface close to the decoding center, probably blocks exit of the E-site tRNA. The sequence is that of Small ribosomal subunit protein uS7 from Leuconostoc citreum (strain KM20).